The following is a 335-amino-acid chain: Glutamyl-tRNA reductase (335 aa).

Substrate-binding positions include 60–63, Ser-110, 115–117, and Gln-121; these read TCHR and ETE. Cys-61 (nucleophile) is an active-site residue. An NADP(+)-binding site is contributed by 189 to 194; that stretch reads GYSEIN.

This sequence belongs to the glutamyl-tRNA reductase family. Homodimer.

The catalysed reaction is (S)-4-amino-5-oxopentanoate + tRNA(Glu) + NADP(+) = L-glutamyl-tRNA(Glu) + NADPH + H(+). It participates in porphyrin-containing compound metabolism; protoporphyrin-IX biosynthesis; 5-aminolevulinate from L-glutamyl-tRNA(Glu): step 1/2. In terms of biological role, catalyzes the NADPH-dependent reduction of glutamyl-tRNA(Glu) to glutamate 1-semialdehyde (GSA). The chain is Glutamyl-tRNA reductase from Chlamydia trachomatis serovar A (strain ATCC VR-571B / DSM 19440 / HAR-13).